The chain runs to 397 residues: MEKRWKWLKAFIKFVFIQFNQKQTSAMAAELTLSNMLALVPLMTVAVSLMAVFPSFEGVNTQVQALIFDNLMPETGLAVQEHLNEYVSKSKNLSAIGLGFLIVTSLLLMRSIDRSINALWETPTQRKGIHKILAYWAMLTMAPILIAASLAASSYFATLPIVSDLSGILTFGLPFILIVLAFSALYMVVPYTQVRFYKALIAAVITAILFEAAKYGFAIFVTKFSSYELIYGAITAIPIFFLWVYLSWSILLLGVIVCFGLHRFEVESEKHEHEFISVLKILQFFIQAQDKESSLSLEQLKSKFSYLHEQTLRGYLEQLLRLNFLAKLEGEQYCLKLTGHSLTIEEVYRRGNWRLPNNNQALSDEKNDSFSTPIEQANLEMAKALDVELVSTNSVNS.

6 helical membrane passes run 36–56, 92–112, 132–152, 168–188, 201–221, and 237–257; these read MLAL…FPSF, NLSA…MRSI, ILAY…SLAA, ILTF…LYMV, IAAV…AIFV, and IPIF…GVIV.

It belongs to the UPF0761 family.

It is found in the cell inner membrane. The polypeptide is UPF0761 membrane protein Kkor_1635 (Kangiella koreensis (strain DSM 16069 / JCM 12317 / KCTC 12182 / SW-125)).